Reading from the N-terminus, the 64-residue chain is Epidermal growth factor (64 aa).

The N-terminal stretch at 1–21 (MMRHLLLVGAAILIFVSDAQA) is a signal peptide. Residue glutamine 22 is modified to Pyrrolidone carboxylic acid. An EGF-like domain is found at 25–61 (GEDPCQIVRCSYGANCIAYGDTAICECPFGYSGIRCQ). 3 disulfide bridges follow: cysteine 29–cysteine 40, cysteine 34–cysteine 49, and cysteine 51–cysteine 60.

As to expression, albumen gland. Up-regulated in adult CNS after axotomy.

It is found in the secreted. In terms of biological role, induces neurite outgrowth in specific adult neurons in vitro. This chain is Epidermal growth factor, found in Lymnaea stagnalis (Great pond snail).